A 342-amino-acid chain; its full sequence is Cyclin pch1 (342 aa).

The interval 261–342 (LPIDQKNGSH…TDKEMETEAS (82 aa)) is disordered. Over residues 278 to 314 (TPSSLASVSTQATPQHQNSSGRTDSFHSLNTETPSKS) the composition is skewed to polar residues. Phosphothreonine is present on Thr-300. Position 302 is a phosphoserine (Ser-302). The segment covering 329 to 342 (KSSDTDKEMETEAS) has biased composition (basic and acidic residues).

The protein belongs to the cyclin family. Cyclin C subfamily. In terms of assembly, interacts with cdc2 protein kinase and with the N-terminal domain of cdk9.

It is found in the nucleus. In terms of biological role, essential for progression through the whole cell cycle. The polypeptide is Cyclin pch1 (pch1) (Schizosaccharomyces pombe (strain 972 / ATCC 24843) (Fission yeast)).